Reading from the N-terminus, the 198-residue chain is Ras-related protein RabH (198 aa).

A GTP-binding site is contributed by 14–21 (GDWNVGKS). Residues 36–44 (TKLSMGEHF) carry the Effector region motif. GTP is bound by residues 62–66 (DTSGM) and 120–123 (SKFD). Cysteine methyl ester is present on cysteine 195. Residue cysteine 195 is the site of S-geranylgeranyl cysteine attachment. The propeptide at 196-198 (SIN) is removed in mature form.

This sequence belongs to the small GTPase superfamily. Rab family.

The protein resides in the cell membrane. This is Ras-related protein RabH (rabH) from Dictyostelium discoideum (Social amoeba).